The following is a 299-amino-acid chain: tRNA pseudouridine synthase B (299 aa).

Residue D39 is the Nucleophile of the active site.

This sequence belongs to the pseudouridine synthase TruB family. Type 1 subfamily.

The enzyme catalyses uridine(55) in tRNA = pseudouridine(55) in tRNA. Responsible for synthesis of pseudouridine from uracil-55 in the psi GC loop of transfer RNAs. This chain is tRNA pseudouridine synthase B, found in Syntrophomonas wolfei subsp. wolfei (strain DSM 2245B / Goettingen).